The primary structure comprises 473 residues: Cysteine--tRNA ligase (473 aa).

Residue Cys28 coordinates Zn(2+). Residues 30-40 (MTVYDYCHLGH) carry the 'HIGH' region motif. Cys209, His234, and Glu238 together coordinate Zn(2+). The 'KMSKS' region motif lies at 282-286 (KMSKS). Residue Lys285 coordinates ATP.

This sequence belongs to the class-I aminoacyl-tRNA synthetase family. Monomer. Requires Zn(2+) as cofactor.

It localises to the cytoplasm. It carries out the reaction tRNA(Cys) + L-cysteine + ATP = L-cysteinyl-tRNA(Cys) + AMP + diphosphate. In Neisseria meningitidis serogroup B (strain ATCC BAA-335 / MC58), this protein is Cysteine--tRNA ligase.